The following is a 148-amino-acid chain: Outer envelope pore protein 16-1, chloroplastic (148 aa).

The tract at residues 2-73 (PSSTFSGTVS…EHALKKLCKE (72 aa)) is contains 4 beta strands. The next 3 helical transmembrane spans lie at 75 to 91 (VYWG…EYGI), 102 to 118 (NAML…SAVG), and 125 to 142 (IVID…SQFV).

Belongs to the Tim17/Tim22/Tim23 family. Plastid outer envelope porin OEP16 (TC 1.B.30) subfamily. Homodimer and oligomers in membrane. Forms large complexes including TOC33, pPORA and OEP161 during pPORA import into plastids at the plastid envelope membrane. As to expression, expressed predominantly in leaves and cotyledons.

It localises to the plastid. It is found in the chloroplast outer membrane. Its subcellular location is the etioplast membrane. Its activity is regulated as follows. Stimulated by GTP. Functionally, voltage-dependent high-conductance channel with a slight cation-selectivity; selective for amino acids but excludes triosephosphates or uncharged sugars. Non-essential amino acid-selective channel protein and translocation pore for NADPH:protochlorophyllide oxidoreductase A (PORA) and possibly PORB. Involved in PORA precursor (pPORA) import and thus confers photoprotection onto etiolated seedlings during greening. This Arabidopsis thaliana (Mouse-ear cress) protein is Outer envelope pore protein 16-1, chloroplastic (OEP161).